Consider the following 549-residue polypeptide: Cytoplasmic trehalase (549 aa).

Residues R168, 175–176 (WD), N212, 221–223 (RSQ), 292–294 (RDE), and G324 each bind substrate. Catalysis depends on proton donor/acceptor residues D326 and E509. Residue E525 participates in substrate binding.

This sequence belongs to the glycosyl hydrolase 37 family. Monomer.

Its subcellular location is the cytoplasm. The catalysed reaction is alpha,alpha-trehalose + H2O = alpha-D-glucose + beta-D-glucose. It participates in glycan degradation; trehalose degradation; D-glucose from alpha,alpha-trehalose: step 1/1. In terms of biological role, hydrolyzes trehalose to glucose. Could be involved, in cells returning to low osmolarity conditions, in the utilization of the accumulated cytoplasmic trehalose, which was synthesized in response to high osmolarity. This chain is Cytoplasmic trehalase, found in Salmonella arizonae (strain ATCC BAA-731 / CDC346-86 / RSK2980).